A 79-amino-acid chain; its full sequence is ATP synthase subunit c (79 aa).

Transmembrane regions (helical) follow at residues 11-31 (MAAA…IGIL) and 53-73 (FFIV…LGLY).

Belongs to the ATPase C chain family. In terms of assembly, F-type ATPases have 2 components, F(1) - the catalytic core - and F(0) - the membrane proton channel. F(1) has five subunits: alpha(3), beta(3), gamma(1), delta(1), epsilon(1). F(0) has three main subunits: a(1), b(2) and c(10-14). The alpha and beta chains form an alternating ring which encloses part of the gamma chain. F(1) is attached to F(0) by a central stalk formed by the gamma and epsilon chains, while a peripheral stalk is formed by the delta and b chains.

It localises to the cell inner membrane. Its function is as follows. F(1)F(0) ATP synthase produces ATP from ADP in the presence of a proton or sodium gradient. F-type ATPases consist of two structural domains, F(1) containing the extramembraneous catalytic core and F(0) containing the membrane proton channel, linked together by a central stalk and a peripheral stalk. During catalysis, ATP synthesis in the catalytic domain of F(1) is coupled via a rotary mechanism of the central stalk subunits to proton translocation. Key component of the F(0) channel; it plays a direct role in translocation across the membrane. A homomeric c-ring of between 10-14 subunits forms the central stalk rotor element with the F(1) delta and epsilon subunits. This is ATP synthase subunit c from Serratia proteamaculans (strain 568).